A 328-amino-acid chain; its full sequence is DNA-directed RNA polymerase subunit alpha (328 aa).

The tract at residues 1 to 231 is alpha N-terminal domain (alpha-NTD); it reads MIYQMQMPAK…EHVAFFADFS (231 aa). Positions 252-328 are alpha C-terminal domain (alpha-CTD); the sequence is MRKLLNTKIE…MDITKYQMKG (77 aa).

Belongs to the RNA polymerase alpha chain family. Homodimer. The RNAP catalytic core consists of 2 alpha, 1 beta, 1 beta' and 1 omega subunit. When a sigma factor is associated with the core the holoenzyme is formed, which can initiate transcription.

The catalysed reaction is RNA(n) + a ribonucleoside 5'-triphosphate = RNA(n+1) + diphosphate. Its function is as follows. DNA-dependent RNA polymerase catalyzes the transcription of DNA into RNA using the four ribonucleoside triphosphates as substrates. The sequence is that of DNA-directed RNA polymerase subunit alpha from Chlorobium phaeovibrioides (strain DSM 265 / 1930) (Prosthecochloris vibrioformis (strain DSM 265)).